Reading from the N-terminus, the 435-residue chain is Transcription factor gkaF (435 aa).

Positions Met1–Lys19 are enriched in basic and acidic residues. 3 disordered regions span residues Met1–Trp40, Ser115–Ser158, and Phe231–Pro257. The segment covering Pro28–Trp40 has biased composition (polar residues). Over residues Ser143 to Ser158 the composition is skewed to low complexity.

The protein localises to the nucleus. Its function is as follows. Transcription factor; part of the gene cluster that mediates the biosynthesis of GKK1032, fungal natural products containing a macrocyclic para-cyclophane connected to a decahydrofluorene ring system that show potent antitumor activities. This Penicillium citrinum protein is Transcription factor gkaF.